Consider the following 148-residue polypeptide: Large ribosomal subunit protein bL9 (148 aa).

This sequence belongs to the bacterial ribosomal protein bL9 family.

Its function is as follows. Binds to the 23S rRNA. This is Large ribosomal subunit protein bL9 from Listeria welshimeri serovar 6b (strain ATCC 35897 / DSM 20650 / CCUG 15529 / CIP 8149 / NCTC 11857 / SLCC 5334 / V8).